A 245-amino-acid polypeptide reads, in one-letter code: PF03932 family protein CutC (245 aa).

It belongs to the CutC family.

It localises to the cytoplasm. The sequence is that of PF03932 family protein CutC from Rhizobium meliloti (strain 1021) (Ensifer meliloti).